Reading from the N-terminus, the 1756-residue chain is MESQQLSNYPHISHGSACASVTSKEVHTNQDPLDVSASKIQEYDKASTKANSQQTTTPASSAVPENPHHASPQPASVPPPQNGPYPQQCMMTQNQANPSGWSFYGHPSMIPYTPYQMSPMYFPPGPQSQFPQYPSSVGTPLSTPSPESGNTFTDSSSADSDMTSTKKYVRPPPMLTSPNDFPNWVKTYIKFLQNSNLGGIIPTVNGKPVRPITDDELTFLYNAFQIFAPSQFLPTWVKDILSVDYTDIMKILSKSIEKMQSDTQEANDIVTLANLQYNGSTPADAFETKVTNIIDRLNNNGIHINNKVACQLIMRGLSGEYKFLRYTRHRHLNMTVAELFLDIHAIYEEQQGSRNSKPNYRRNPSDEKNDSRSYTNTTKPKVIARNPQKTNNSKSKTARAHNVSTSNNSPSTDNDSISKSTTEPIQLNNKHDLHLGQKLTESTVNHTNHSDDELPGHLLLDSGASRTLIRSAHHIHSASSNPDINVVDAQKRNIPINAIGDLQFHFQDNTKTSLKVLHTPNIAYDLLSLNELAAVDITACFTKNVLERSDGTVLAPIVKYGDFYWVSKKYLLPSNISVPTINNVHTSESTRKYPYPFIHRMLAHANAQTIRYSLKNNTITYFNESDVDWSSAIDYQCPDCLIGKSTKHRHIKGSRLKYQNSYEPFQYLHTDIFGPVHNLPKSAPSYFISFTDETTKFRWVYPLHDRREDSILDVFTTILAFIKNQFQASVLVIQMDRGSEYTNRTLHKFLEKNGITPCYTTTADSRAHGVAERLNRTLLDDCRTQLQCSGLPNHLWFSAIEFSTIVRNSLASPKSKKSARQHAGLAGLDISTLLPFGQPVIVNDHNPNSKIHPRGIPGYALHPSRNSYGYIIYLPSLKKTVDTTNYVILQGKDSRLDQFNYDALTFDEDLNRLTASYQSFIASNEIQQSNDLNIESDHDFQSDIELYPEQPRNVLSKAVSPTDSTPPSTHTEDSKRVSKTNIRAPREVDPNISESNILPSKKRSSTPQISDIESTDSGGMHRLDVPLLAPMSQSNTHESSYASKSKDFRHSDSYSDNETNHTNVPISSTGGTNNKTVPQTSEQETEKRIIHRFTSDRILPSSESNSLHHVVPIKTSDTCFKENTEESIIADLPLPDLPPEPPTELSDSFKELPPINSRQTNSSLGGIGDSNAYTTINSKKRSLEDNETEIKVSRDTWNTKNMRSLEPPRSKKRIHLIAAVKAVKSIKPIRTTLRYDEAITYNKDIKEKEKYIEAYHKEVNQLLKMKTWDTDKYYDRKEIDPKRVINSMFIFNRKRDGTHKARFVARGDIQHPDTYDSGMQSNTVHHYALMTSLSLALDNNYYITQLDISSAYLYADIKEELYIRPPPHLGMNDKLIRLKKSLYGLKQSGANWYETIKSYLIKQCGMEEVRGWSCVFKNSQVTICLFVDDMILFSKDLNSNKRIIAKLKMQYDTKIINLGESDDEIQHDILGLEIKYQRGKYMKLGMENSLTEKIPKLNVPLNPNGRKLGAPGQPGLYINQQELELEEDDYKMKVHEMQKLIGLASYVGYKFRFDLLYYINTLAQHILFPSKQVLDMTYELIQFIWNTRDKQLIWHKSKPVKPTNKLVVISDASYGNQPYYKSQIGNIYLLNGKVIGGKSTKASLTCTSTTEAEIHAISESVPLLNNLSYLIQELDKKPITKGLLTDSKSTISIIISNNEEKFRNRFFGTKAMRLRDEVSGNHLHVCYIETKKNIADVMTKPLPIKTFKLLTNKWIH.

3 stretches are compositionally biased toward polar residues: residues 1–10 (MESQQLSNYP), 48–60 (TKAN…TPAS), and 127–152 (QSQF…GNTF). Disordered stretches follow at residues 1–93 (MESQ…MMTQ), 126–173 (PQSQ…RPPP), and 352–421 (GSRN…SKST). The segment covering 153–165 (TDSSSADSDMTST) has biased composition (low complexity). Positions 299-401 (NNGIHINNKV…NSKSKTARAH (103 aa)) are RNA-binding. Positions 402–418 (NVSTSNNSPSTDNDSIS) are enriched in low complexity. S416 bears the Phosphoserine mark. D461 functions as the For protease activity; shared with dimeric partner in the catalytic mechanism. Residues 583–640 (NVHTSESTRKYPYPFIHRMLAHANAQTIRYSLKNNTITYFNESDVDWSSAIDYQCPDC) form an integrase-type zinc finger-like region. One can recognise an Integrase catalytic domain in the interval 660–835 (NSYEPFQYLH…AGLDISTLLP (176 aa)). Residues D671 and D736 each contribute to the Mg(2+) site. 2 disordered regions span residues 956-1088 (SKAV…TEKR) and 1142-1173 (PTEL…SNAY). Residues 960–969 (SPTDSTPPST) show a composition bias toward low complexity. Polar residues-rich tracts occupy residues 1005 to 1017 (STPQ…STDS) and 1031 to 1043 (MSQS…SYAS). Basic and acidic residues predominate over residues 1044 to 1053 (KSKDFRHSDS). Polar residues predominate over residues 1054–1082 (YSDNETNHTNVPISSTGGTNNKTVPQTSE). Residues 1179-1213 (KKRSLEDNETEIKVSRDTWNTKNMRSLEPPRSKKR) carry the Bipartite nuclear localization signal motif. Positions 1339–1477 (NNYYITQLDI…DILGLEIKYQ (139 aa)) constitute a Reverse transcriptase Ty1/copia-type domain. Residues D1347, D1428, D1429, D1611, E1653, and D1686 each coordinate Mg(2+). In terms of domain architecture, RNase H Ty1/copia-type spans 1611 to 1753 (DASYGNQPYY…IKTFKLLTNK (143 aa)).

As to quaternary structure, the capsid protein forms a homotrimer, from which the VLPs are assembled. The protease is a homodimer, whose active site consists of two apposed aspartic acid residues. In terms of processing, initially, virus-like particles (VLPs) are composed of the structural unprocessed proteins Gag and Gag-Pol, and also contain the host initiator methionine tRNA (tRNA(i)-Met) which serves as a primer for minus-strand DNA synthesis, and a dimer of genomic Ty RNA. Processing of the polyproteins occurs within the particle and proceeds by an ordered pathway, called maturation. First, the protease (PR) is released by autocatalytic cleavage of the Gag-Pol polyprotein yielding capsid protein p45 and a Pol-p154 precursor protein. This cleavage is a prerequisite for subsequent processing of Pol-p154 at the remaining sites to release the mature structural and catalytic proteins. Maturation takes place prior to the RT reaction and is required to produce transposition-competent VLPs.

It localises to the cytoplasm. Its subcellular location is the nucleus. It catalyses the reaction DNA(n) + a 2'-deoxyribonucleoside 5'-triphosphate = DNA(n+1) + diphosphate. It carries out the reaction Endonucleolytic cleavage to 5'-phosphomonoester.. Functionally, capsid protein (CA) is the structural component of the virus-like particle (VLP), forming the shell that encapsulates the retrotransposons dimeric RNA genome. The particles are assembled from trimer-clustered units and there are holes in the capsid shells that allow for the diffusion of macromolecules. CA also has nucleocapsid-like chaperone activity, promoting primer tRNA(i)-Met annealing to the multipartite primer-binding site (PBS), dimerization of Ty1 RNA and initiation of reverse transcription. In terms of biological role, the aspartyl protease (PR) mediates the proteolytic cleavages of the Gag and Gag-Pol polyproteins after assembly of the VLP. Reverse transcriptase/ribonuclease H (RT) is a multifunctional enzyme that catalyzes the conversion of the retro-elements RNA genome into dsDNA within the VLP. The enzyme displays a DNA polymerase activity that can copy either DNA or RNA templates, and a ribonuclease H (RNase H) activity that cleaves the RNA strand of RNA-DNA heteroduplexes during plus-strand synthesis and hydrolyzes RNA primers. The conversion leads to a linear dsDNA copy of the retrotransposon that includes long terminal repeats (LTRs) at both ends. Its function is as follows. Integrase (IN) targets the VLP to the nucleus, where a subparticle preintegration complex (PIC) containing at least integrase and the newly synthesized dsDNA copy of the retrotransposon must transit the nuclear membrane. Once in the nucleus, integrase performs the integration of the dsDNA into the host genome. This chain is Transposon Ty1-BR Gag-Pol polyprotein (TY1B-BR), found in Saccharomyces cerevisiae (strain ATCC 204508 / S288c) (Baker's yeast).